The following is a 676-amino-acid chain: ATP-dependent RNA helicase dbp-9 (676 aa).

Positions 1 to 97 (MAKRKLNETD…SEKDDADLTF (97 aa)) are disordered. Residues 70 to 90 (QQLKDEQKQQDEKDEKKQSEK) show a composition bias toward basic and acidic residues. A Q motif motif is present at residues 95 to 123 (LTFSDLGLDPRLVQAVAKQSFEKPTLVQR). Positions 126–304 (IPLALAGQDV…KGFFCRNPTM (179 aa)) constitute a Helicase ATP-binding domain. Residue 139–146 (AKTGSGKT) participates in ATP binding. The DEAD box signature appears at 251–254 (DEAD). The 225-residue stretch at 317–541 (KLTQFYVKCG…PYNFNKDQME (225 aa)) folds into the Helicase C-terminal domain. Residues 410–432 (EDEKTEEKKEEQGEKKEGDEKKN) show a composition bias toward basic and acidic residues. Disordered stretches follow at residues 410–444 (EDEK…RRDQ) and 633–676 (FKKQ…RVRK). Residues 642–663 (TRGKKGAKGGKGGHGKYKKGPG) are compositionally biased toward basic residues.

It belongs to the DEAD box helicase family. DDX56/DBP9 subfamily.

Its subcellular location is the nucleus. The protein localises to the nucleolus. It catalyses the reaction ATP + H2O = ADP + phosphate + H(+). ATP-binding RNA helicase involved in the biogenesis of 60S ribosomal subunits and is required for the normal formation of 25S and 5.8S rRNAs. The chain is ATP-dependent RNA helicase dbp-9 (dbp-9) from Neurospora crassa (strain ATCC 24698 / 74-OR23-1A / CBS 708.71 / DSM 1257 / FGSC 987).